The primary structure comprises 290 residues: MKYRKLIILVLSILIILPVSTLDGHHIANADDDPPKKLKYKENSALALNYHRVRKANFLNNFIYFFSSSKEIKNYSVSQSQFESQIKWLKSHDAKFLTLKEFLYYKKKGKFPKRSVWINFDDMDETIYENAYPILKKYKIPATGFIITGHVGEENFHNLDMISKKELKEMYKTGLWEFETHTHDMHNLSKNNKSKLMKASEATIIKDLNKSEKYLTKNFKKSQKTIAYPYGLMNDDKLPVIKKAGLKYGFSLEEKAVTPNSNDYYIPRILISDDAFEHLIKRWDGFHEKD.

A signal peptide spans 1-28; that stretch reads MKYRKLIILVLSILIILPVSTLDGHHIA. In terms of domain architecture, NodB homology spans 114–290; the sequence is RSVWINFDDM…KRWDGFHEKD (177 aa).

The protein belongs to the polysaccharide deacetylase family.

The protein localises to the secreted. Its subcellular location is the cell wall. Its function is as follows. Catalyzes the N-deacetylation of poly-beta-1,6-N-acetyl-D-glucosamine (PNAG, also referred to as PIA), a biofilm adhesin polysaccharide. N-deacetylation is crucial for attachment of the polysaccharide to the bacterial cell surface; it leads to the introduction of positive charges in the otherwise neutral PIA polymer, allowing electrostatic interactions. The protein is Poly-beta-1,6-N-acetyl-D-glucosamine N-deacetylase (icaB) of Staphylococcus aureus (strain MRSA252).